The sequence spans 395 residues: Homoserine O-acetyltransferase (395 aa).

The 299-residue stretch at 65–363 (PIVLIEHALT…SPTGHDGFLI (299 aa)) folds into the AB hydrolase-1 domain. The active-site Nucleophile is the Ser160. Arg230 is a binding site for substrate. Residues Asp328 and His358 contribute to the active site. Asp359 lines the substrate pocket.

It belongs to the AB hydrolase superfamily. MetX family. In terms of assembly, homodimer.

Its subcellular location is the cytoplasm. It catalyses the reaction L-homoserine + acetyl-CoA = O-acetyl-L-homoserine + CoA. It participates in amino-acid biosynthesis; L-methionine biosynthesis via de novo pathway; O-acetyl-L-homoserine from L-homoserine: step 1/1. In terms of biological role, transfers an acetyl group from acetyl-CoA to L-homoserine, forming acetyl-L-homoserine. The protein is Homoserine O-acetyltransferase of Corynebacterium jeikeium (strain K411).